The chain runs to 152 residues: Synaptobrevin (152 aa).

A compositionally biased stretch (polar residues) spans methionine 1 to aspartate 16. A disordered region spans residues methionine 1–tyrosine 30. Residues methionine 1–lysine 110 lie on the Cytoplasmic side of the membrane. A v-SNARE coiled-coil homology domain is found at lysine 47–alanine 107. A helical; Anchor for type IV membrane protein membrane pass occupies residues methionine 111–valine 130. At tryptophan 131–histidine 152 the chain is on the vesicular side. The tract at residues serine 133–histidine 152 is disordered.

The protein belongs to the synaptobrevin family. As to quaternary structure, part of the SNARE core complex containing Snap25 and syntaxin. Post-translationally, ubiquitinated by gzl, regulating endocytic trafficking. In wing imaginal disks, ubiquitination by gzl promotes transcytosis of wingless (wg) to the basolateral surface. Not nervous system-specific; abundant in cells of the gut and Malpighian tubules.

The protein resides in the cytoplasmic vesicle. It is found in the secretory vesicle. It localises to the synaptic vesicle membrane. The protein localises to the cell membrane. Involved in the targeting and/or fusion of transport vesicles to their target membrane. The sequence is that of Synaptobrevin from Drosophila melanogaster (Fruit fly).